Here is a 519-residue protein sequence, read N- to C-terminus: uncharacterized protein (519 aa).

The next 4 membrane-spanning stretches (helical) occupy residues 141–161 (GSSL…ANVF), 202–222 (LGET…WALA), 385–405 (FVVR…PFVG), and 433–453 (TVVP…AELV).

Its subcellular location is the cell membrane. This is an uncharacterized protein from Sinorhizobium fredii (strain NBRC 101917 / NGR234).